A 179-amino-acid chain; its full sequence is Translationally-controlled tumor protein homolog (179 aa).

The region spanning 1 to 179 (MIIYKDIISG…WKHGLEEMKV (179 aa)) is the TCTP domain.

Belongs to the TCTP family.

The protein localises to the cytoplasm. The protein resides in the cytoskeleton. Its function is as follows. Involved in protein synthesis. Involved in microtubule stabilization. Involved in osmoadaptation. The protein is Translationally-controlled tumor protein homolog of Emericella nidulans (strain FGSC A4 / ATCC 38163 / CBS 112.46 / NRRL 194 / M139) (Aspergillus nidulans).